We begin with the raw amino-acid sequence, 303 residues long: Taste receptor type 2 member 13 (303 aa).

Topologically, residues 1 to 7 (MESALLS) are extracellular. Residues 8-28 (ILTLVIIAEFVIGNLSNGFXV) form a helical membrane-spanning segment. Over 29–55 (LINCIDWVSKRQLSSVDKILTFLAISR) the chain is Cytoplasmic. Residues 56–76 (IGLIWELLVSWFLGLHYLAIF) form a helical membrane-spanning segment. Residues 77-85 (VSGTGLRIM) lie on the Extracellular side of the membrane. The helical transmembrane segment at 86–106 (IFSWVVSNHFSLWLATILSIF) threads the bilayer. Residues 107-128 (YLLKIASFSSPAFLYLKWRVNQ) are Cytoplasmic-facing. Residues 129-149 (VILMILLGTLVFLFLNLIQIN) form a helical membrane-spanning segment. Over 150–184 (IHIKDWLDRCERNTIWNFSMSGLPTFSVPVKFTMT) the chain is Extracellular. The N-linked (GlcNAc...) asparagine glycan is linked to Asn166. A helical transmembrane segment spans residues 185 to 205 (MFSLAPFTVALISFLLLIFSL). Over 206 to 232 (RKHLQKMQLNYKGHREPRTKAHINALK) the chain is Cytoplasmic. A helical transmembrane segment spans residues 233-253 (IVISFLLLYASFFLCILISWI). The Extracellular segment spans residues 254 to 261 (SELYQNTL). A helical transmembrane segment spans residues 262–282 (IHMFCQTIGVFYPSSHSFLLI). Residues 283–303 (LGNPKLRQASLLVAAKVWAKR) lie on the Cytoplasmic side of the membrane.

It belongs to the G-protein coupled receptor T2R family.

Its subcellular location is the membrane. In terms of biological role, receptor that may play a role in the perception of bitterness and is gustducin-linked. May play a role in sensing the chemical composition of the gastrointestinal content. The activity of this receptor may stimulate alpha gustducin, mediate PLC-beta-2 activation and lead to the gating of TRPM5. The polypeptide is Taste receptor type 2 member 13 (TAS2R13) (Papio hamadryas (Hamadryas baboon)).